A 292-amino-acid chain; its full sequence is Polyketide transferase af380 (292 aa).

An abhydrolase domain region spans residues 46–267 (DVAVWFQQQG…FDLVAGRGHM (222 aa)).

It belongs to the polyketide transferase af380 family.

The catalysed reaction is fumagillol + dodecapentaneoyl-[polyketide synthase] = prefumagillin + holo-[polyketide synthase]. The protein operates within secondary metabolite biosynthesis; terpenoid biosynthesis. Polyketide transferase; part of the gene cluster that mediates the biosynthesis of fumagillin, a meroterpenoid that has numerous biological activities including irreversible inhibition of human type 2 methionine aminopeptidase (METAP2). Within the pathway, the polyketide transferase af380 catalyzes the transfer of a dodecapentaenoyl group synthesized by the polyketide synthase af370 onto 5R-hydroxy-seco-sesquiterpene to produce prefumagillin. The pathway begins with the conversion of farnesyl pyrophosphate (FPP) to beta-trans-bergamotene by the membrane-bound beta-trans-bergamotene synthase af520. The multifunctional cytochrome P450 monooxygenase af510 then converts beta-trans-bergamotene into 5-keto-demethoxyfumagillol via several oxydation steps. 5-keto-demethoxyfumagillol is then subjected to successive C-6 hydroxylation and O-methylation by the dioxygenase af480 and O-methyltransferase af390-400, respectively, to yield 5-keto-fumagillol, which is then stereoselectively reduced by the keto-reductase af490 to 5R-hydroxy-seco-sesquiterpene. The next step is the polyketide transferase af380-catalyzed transfer of a dodecapentaenoyl group synthesized by the polyketide synthase af370 onto 5R-hydroxy-seco-sesquiterpene which leads to the production of prefumagillin. Finally, oxidative cleavage by the monooxygenase af470 converts prefumagillin to fumagillin. The polypeptide is Polyketide transferase af380 (Aspergillus fumigatus (strain ATCC MYA-4609 / CBS 101355 / FGSC A1100 / Af293) (Neosartorya fumigata)).